Consider the following 179-residue polypeptide: Large ribosomal subunit protein uL5 (179 aa).

This sequence belongs to the universal ribosomal protein uL5 family. As to quaternary structure, part of the 50S ribosomal subunit; part of the 5S rRNA/L5/L18/L25 subcomplex. Contacts the 5S rRNA and the P site tRNA. Forms a bridge to the 30S subunit in the 70S ribosome.

Functionally, this is one of the proteins that bind and probably mediate the attachment of the 5S RNA into the large ribosomal subunit, where it forms part of the central protuberance. In the 70S ribosome it contacts protein S13 of the 30S subunit (bridge B1b), connecting the 2 subunits; this bridge is implicated in subunit movement. Contacts the P site tRNA; the 5S rRNA and some of its associated proteins might help stabilize positioning of ribosome-bound tRNAs. The protein is Large ribosomal subunit protein uL5 of Chromobacterium violaceum (strain ATCC 12472 / DSM 30191 / JCM 1249 / CCUG 213 / NBRC 12614 / NCIMB 9131 / NCTC 9757 / MK).